Here is a 477-residue protein sequence, read N- to C-terminus: Bifunctional protein HldE (477 aa).

The ribokinase stretch occupies residues 1–319 (MKITLPPFDQ…RALQEQEQSG (319 aa)). ATP is bound at residue 195 to 198 (NLAE). Asp264 is an active-site residue. The interval 344-477 (MTNGCFDLLH…IERMQSAPDT (134 aa)) is cytidylyltransferase.

The protein in the N-terminal section; belongs to the carbohydrate kinase PfkB family. It in the C-terminal section; belongs to the cytidylyltransferase family. Homodimer.

The enzyme catalyses D-glycero-beta-D-manno-heptose 7-phosphate + ATP = D-glycero-beta-D-manno-heptose 1,7-bisphosphate + ADP + H(+). It carries out the reaction D-glycero-beta-D-manno-heptose 1-phosphate + ATP + H(+) = ADP-D-glycero-beta-D-manno-heptose + diphosphate. It participates in nucleotide-sugar biosynthesis; ADP-L-glycero-beta-D-manno-heptose biosynthesis; ADP-L-glycero-beta-D-manno-heptose from D-glycero-beta-D-manno-heptose 7-phosphate: step 1/4. Its pathway is nucleotide-sugar biosynthesis; ADP-L-glycero-beta-D-manno-heptose biosynthesis; ADP-L-glycero-beta-D-manno-heptose from D-glycero-beta-D-manno-heptose 7-phosphate: step 3/4. Functionally, catalyzes the phosphorylation of D-glycero-D-manno-heptose 7-phosphate at the C-1 position to selectively form D-glycero-beta-D-manno-heptose-1,7-bisphosphate. Catalyzes the ADP transfer from ATP to D-glycero-beta-D-manno-heptose 1-phosphate, yielding ADP-D-glycero-beta-D-manno-heptose. This Alkalilimnicola ehrlichii (strain ATCC BAA-1101 / DSM 17681 / MLHE-1) protein is Bifunctional protein HldE.